Reading from the N-terminus, the 137-residue chain is Protein phosphatase 1 regulatory subunit 1B (137 aa).

A disordered region spans residues Asp-1–Gln-137. Thr-33 carries the post-translational modification Phosphothreonine; by PKA. Residues Leu-40–His-62 are compositionally biased toward basic and acidic residues. Phosphoserine is present on residues Ser-44 and Ser-45. Thr-74 is modified (phosphothreonine; by CDK5). Over residues His-88 to Gln-99 the composition is skewed to polar residues. Position 101 is a phosphoserine (Ser-101). Residues Gly-108–Arg-117 show a composition bias toward basic and acidic residues. Residues Glu-118–Gln-137 are compositionally biased toward acidic residues. Position 136 is a phosphoserine (Ser-136).

It belongs to the protein phosphatase inhibitor 1 family. Post-translationally, phosphorylation of Thr-33 is required for activity. In terms of processing, dopamine- and cyclic AMP-regulated neuronal phosphoprotein.

It is found in the cytoplasm. Functionally, inhibitor of protein-phosphatase 1. This is Protein phosphatase 1 regulatory subunit 1B (PPP1R1B) from Sus scrofa (Pig).